We begin with the raw amino-acid sequence, 338 residues long: Nicotinate-nucleotide--dimethylbenzimidazole phosphoribosyltransferase (338 aa).

E305 acts as the Proton acceptor in catalysis.

This sequence belongs to the CobT family.

The catalysed reaction is 5,6-dimethylbenzimidazole + nicotinate beta-D-ribonucleotide = alpha-ribazole 5'-phosphate + nicotinate + H(+). It functions in the pathway nucleoside biosynthesis; alpha-ribazole biosynthesis; alpha-ribazole from 5,6-dimethylbenzimidazole: step 1/2. Functionally, catalyzes the synthesis of alpha-ribazole-5'-phosphate from nicotinate mononucleotide (NAMN) and 5,6-dimethylbenzimidazole (DMB). In Sinorhizobium medicae (strain WSM419) (Ensifer medicae), this protein is Nicotinate-nucleotide--dimethylbenzimidazole phosphoribosyltransferase.